The chain runs to 138 residues: MTEQQARIVAFDDVPPNRRRGGDVRALLTPTTAGATSGFMGVAVVRPGERISEHYHPYSEEFVYVTAGAFEVDLDDVPHPLRTGQGLLIPKDVRHRFRNTGDVEARLVFHLGPLAPRPDLGHVDTEETDETAPAGVVS.

One can recognise a Cupin type-2 domain in the interval 42–108 (VAVVRPGERI…NTGDVEARLV (67 aa)). The segment at 118–138 (PDLGHVDTEETDETAPAGVVS) is disordered.

It belongs to the SchB/CurC family.

The sequence is that of Protein SchB (schB) from Streptomyces halstedii.